Reading from the N-terminus, the 329-residue chain is Serpentine receptor class alpha-3 (329 aa).

Helical transmembrane passes span 25 to 45 (LIYFVLIITTLFFTFFALKVI), 57 to 77 (ILLYQNLFSANIHQIFLGITI), 104 to 124 (YLEMFIAGLSGMVYGQTGLLF), 144 to 164 (GIITSIIVLLLSGSTARIIIW), 187 to 207 (TMFFSICTFISLFNLVISLLI), 238 to 258 (ICFLTFFQFIFMFIYSFGVFL), and 273 to 293 (FWVVWVYTIPFIAASFPILLI).

Belongs to the nematode receptor-like protein sra family.

The protein localises to the membrane. The chain is Serpentine receptor class alpha-3 (sra-3) from Caenorhabditis elegans.